Consider the following 566-residue polypeptide: Potassium-transporting ATPase potassium-binding subunit (566 aa).

12 consecutive transmembrane segments (helical) span residues 6–26 (VALLTSYMLVLLLLAWPLGIA), 60–80 (AAAILVFNLLGAALLFLLMLF), 128–148 (LGLTVHNFLSAANGIAVAFVL), 167–187 (IWRITVYLLLPLSVIYALFLA), 247–267 (LTNFVQMVSILLIPAALCICF), 276–296 (VGSALLWTMGIMLSVAALLIM), 331–351 (FGLWASSLFATITTAASCGAV), 361–381 (LGGLIPMVLMQLGEVVFGGVG), 383–403 (GWYGMMLFVFLTVFLAGLMIG), 423–443 (IGLLIPPALVLLGTALAVILP), 492–512 (LMFVGRFGVMLPVLAIAGALI), and 530–550 (LFVGMLIGVVLLIGALTFIPA).

The protein belongs to the KdpA family. As to quaternary structure, the system is composed of three essential subunits: KdpA, KdpB and KdpC.

It localises to the cell inner membrane. In terms of biological role, part of the high-affinity ATP-driven potassium transport (or Kdp) system, which catalyzes the hydrolysis of ATP coupled with the electrogenic transport of potassium into the cytoplasm. This subunit binds the periplasmic potassium ions and delivers the ions to the membrane domain of KdpB through an intramembrane tunnel. The sequence is that of Potassium-transporting ATPase potassium-binding subunit from Tolumonas auensis (strain DSM 9187 / NBRC 110442 / TA 4).